The primary structure comprises 238 residues: tRNA (guanine-N(7)-)-methyltransferase (238 aa).

4 residues coordinate S-adenosyl-L-methionine: Glu68, Glu93, Asp120, and Asp143. Asp143 is an active-site residue. Substrate is bound by residues Lys147, Asp179, and 216 to 219; that span reads TKFE.

The protein belongs to the class I-like SAM-binding methyltransferase superfamily. TrmB family.

The enzyme catalyses guanosine(46) in tRNA + S-adenosyl-L-methionine = N(7)-methylguanosine(46) in tRNA + S-adenosyl-L-homocysteine. It participates in tRNA modification; N(7)-methylguanine-tRNA biosynthesis. In terms of biological role, catalyzes the formation of N(7)-methylguanine at position 46 (m7G46) in tRNA. This is tRNA (guanine-N(7)-)-methyltransferase from Aliivibrio fischeri (strain MJ11) (Vibrio fischeri).